We begin with the raw amino-acid sequence, 28 residues long: Conotoxin Cl6a (28 aa).

Cystine bridges form between Cys3–Cys13, Cys7–Cys19, and Cys12–Cys24.

Expressed by the venom duct.

It localises to the secreted. The polypeptide is Conotoxin Cl6a (Californiconus californicus (California cone)).